A 220-amino-acid polypeptide reads, in one-letter code: Uracil-DNA glycosylase 1 (220 aa).

The Proton acceptor role is filled by Asp-65.

Belongs to the uracil-DNA glycosylase (UDG) superfamily. UNG family.

The protein localises to the cytoplasm. It catalyses the reaction Hydrolyzes single-stranded DNA or mismatched double-stranded DNA and polynucleotides, releasing free uracil.. Functionally, excises uracil residues from the DNA which can arise as a result of misincorporation of dUMP residues by DNA polymerase or due to deamination of cytosine. The sequence is that of Uracil-DNA glycosylase 1 from Bacteroides fragilis (strain YCH46).